The sequence spans 785 residues: Semaphorin-3F (785 aa).

The signal sequence occupies residues 1–18 (MLVTAFILWASLLTGAWP). Residues 31-545 (RVRLSFKELK…SAVGVTHLSL (515 aa)) form the Sema domain. Residue Asn-53 is glycosylated (N-linked (GlcNAc...) asparagine). Cysteines 104 and 115 form a disulfide. The N-linked (GlcNAc...) asparagine glycan is linked to Asn-126. Cystine bridges form between Cys-133-Cys-142, Cys-300-Cys-412, Cys-324-Cys-372, and Cys-548-Cys-566. The segment at 583 to 602 (RSRRQDVRHGNPIRQCRGFN) is disordered. Positions 605–695 (ANKNAVESVQ…KHIVTRVQLH (91 aa)) constitute an Ig-like C2-type domain. Cysteines 678 and 746 form a disulfide. The segment at 753–785 (VPPRPREAPGALRPPELQDQKKPRNRRHHPPDT) is disordered. Residues 775-785 (PRNRRHHPPDT) are compositionally biased toward basic residues.

This sequence belongs to the semaphorin family. Expressed ubiquitously in adulthood. During embryogenesis, expressed in subregions of the central nervous system and various other tissues like skin, kidney, lung and intestine.

It is found in the secreted. This Mus musculus (Mouse) protein is Semaphorin-3F (Sema3f).